The primary structure comprises 505 residues: Peroxisome proliferator-activated receptor gamma (505 aa).

Thr84 carries an O-linked (GlcNAc) threonine glycan. Position 112 is a phosphoserine; by MAPK (Ser112). Residues 136 to 210 (AIECRVCGDK…VGMSHNAIRF (75 aa)) constitute a DNA-binding region (nuclear receptor). NR C4-type zinc fingers lie at residues 139-159 (CRVCGDKASGFHYGVHACEGC) and 176-198 (CDLNCRIHKKSRNKCQYCRFQKC). Residues 205–280 (HNAIRFGRMP…DKSPFVIYDM (76 aa)) form an interaction with FAM120B region. Residues 238–503 (DLRALAKHLY…HPLLQEIYKD (266 aa)) enclose the NR LBD domain. A Glycyl lysine isopeptide (Lys-Gly) (interchain with G-Cter in ubiquitin) cross-link involves residue Lys252. A 9aaTAD motif is present at residues 495-503 (PLLQEIYKD).

This sequence belongs to the nuclear hormone receptor family. NR1 subfamily. In terms of assembly, heterodimer with other nuclear receptors, such as RXRA. The heterodimer with the retinoic acid receptor RXRA is called adipocyte-specific transcription factor ARF6. Interacts with NCOA6 coactivator, leading to a strong increase in transcription of target genes. Interacts with coactivator PPARBP, leading to a mild increase in transcription of target genes. Interacts with NOCA7 in a ligand-inducible manner. Interacts with NCOA1 and NCOA2 LXXLL motifs. Interacts with ASXL1, ASXL2, DNTTIP2, FAM120B, MAP2K1/MEK1, NR0B2, PDPK1, PRDM16, PRMT2 and TGFB1I1. Interacts (when activated by agonist) with PPP5C. Interacts with HELZ2 and THRAP3; the interaction stimulates the transcriptional activity of PPARG. Interacts with PER2, the interaction is ligand dependent and blocks PPARG recruitment to target promoters. Interacts with NOCT. Interacts with FOXO1 (acetylated form). Interacts with ACTN4. Interacts (when in the liganded conformation) with GPS2. Interacts with CRY1 and CRY2 in a ligand-dependent manner. In the absence of hormonal ligand, interacts with TACC1. In macrophages, interacts with PAQR3 and STUB1; the interactions promote PPARG poylubiquitination and STUB1-mediated degradation. Post-translationally, O-GlcNAcylation at Thr-84 reduces transcriptional activity in adipocytes. In terms of processing, phosphorylated in basal conditions and dephosphorylated when treated with the ligand. May be dephosphorylated by PPP5C. The phosphorylated Ser-112 form is recognized by PER2 and repressed, dephosphorylation at Ser-112 induces adipogenic activity. Ser-112 phosphorylation levels are reduced by 65% in brown adipose tissue compared to white adipose tissue. Ubiquitinated by E3 ubiquitin-protein ligase complex containing FBXO9; leading to proteasomal degradation. Post-translationally, ubiquitinated by E3 ubiquitin-protein ligase complex containing FBXO9; leading to proteasomal degradation. Ubiquitinated at Lys-252 by TRIM55 leading to proteasomal degradation. Ubiquitinated by E3 ubiquitin-protein ligase STUB1/CHIP; leading to proteasomal degradation. Highest expression in white and brown adipose tissue. Also found in liver, skeletal muscle, heart, adrenal gland, spleen, kidney and intestine. Isoform 2 is more abundant than isoform 1 in adipose tissue.

It is found in the nucleus. The protein resides in the cytoplasm. PDPK1 activates its transcriptional activity independently of its kinase activity. Its function is as follows. Nuclear receptor that binds peroxisome proliferators such as hypolipidemic drugs and fatty acids. Once activated by a ligand, the nuclear receptor binds to DNA specific PPAR response elements (PPRE) and modulates the transcription of its target genes, such as acyl-CoA oxidase. It therefore controls the peroxisomal beta-oxidation pathway of fatty acids. Key regulator of adipocyte differentiation and glucose homeostasis. ARF6 acts as a key regulator of the tissue-specific adipocyte P2 (aP2) enhancer. Acts as a critical regulator of gut homeostasis by suppressing NF-kappa-B-mediated pro-inflammatory responses. Plays a role in the regulation of cardiovascular circadian rhythms by regulating the transcription of BMAL1 in the blood vessels. This Mus musculus (Mouse) protein is Peroxisome proliferator-activated receptor gamma (Pparg).